The sequence spans 356 residues: CX3C chemokine receptor 1 (356 aa).

At 1–26 (MTTLYSDWATESFEYDESSEACFIGD) the chain is on the extracellular side. Residues 27-47 (IVAFGTIFLSIFYSLVFAFGL) traverse the membrane as a helical segment. Residues 48-68 (VGNLLVVCALTSSRKPKSITD) lie on the Cytoplasmic side of the membrane. A helical transmembrane segment spans residues 69–89 (IYLLNLALSDLLFVATLPFWT). Topologically, residues 90–105 (HYVISEQGFHNAVCKL) are extracellular. Cys-103 and Cys-176 are disulfide-bonded. Residues 106 to 126 (TTALFFIGFFGGIFFITVISI) form a helical membrane-spanning segment. Over 127–147 (DRYMAIVLAANSINNRTVQHG) the chain is Cytoplasmic. Residues 148-168 (VTTSLGVWAAAILVAAPQFMF) form a helical membrane-spanning segment. Topologically, residues 169–195 (TKQKGNECLGDYPEVLQDIWPVLRNTE) are extracellular. The chain crosses the membrane as a helical span at residues 196 to 216 (ANFLGFLLPVLIMSYCYFRII). Residues 217–232 (QTLFSCKNHKKAKAIK) lie on the Cytoplasmic side of the membrane. Residues 233–253 (LILLVVIVFFLFWTPYNVMIF) traverse the membrane as a helical segment. The Extracellular portion of the chain corresponds to 254–277 (LETLKLYGFFPNCDMKRDLRLALS). A helical membrane pass occupies residues 278-298 (VTETVAFSHCCLNPLIYAFAG). Residues 299-356 (QKFRRYLRHLSRKCQAVLCGRPVHVSFSPSESQRSRQESIVSSNFTHYTSDGDASLLL) lie on the Cytoplasmic side of the membrane. Thr-347 bears the Phosphothreonine mark.

It belongs to the G-protein coupled receptor 1 family. As to quaternary structure, found in a ternary complex with CX3CL1 and ITGAV:ITGB3 or ITGA4:ITGB1. Post-translationally, this protein is not N-glycosylated which is unusual for G-protein-coupled receptors.

The protein localises to the cell membrane. Functionally, receptor for the C-X3-C chemokine fractalkine (CX3CL1) present on many early leukocyte cells; CX3CR1-CX3CL1 signaling exerts distinct functions in different tissue compartments, such as immune response, inflammation, cell adhesion and chemotaxis. CX3CR1-CX3CL1 signaling mediates cell migratory functions. Responsible for the recruitment of natural killer (NK) cells to inflamed tissues. Acts as a regulator of inflammation process leading to atherogenesis by mediating macrophage and monocyte recruitment to inflamed atherosclerotic plaques, promoting cell survival. Involved in airway inflammation by promoting interleukin 2-producing T helper (Th2) cell survival in inflamed lung. Involved in the migration of circulating monocytes to non-inflamed tissues, where they differentiate into macrophages and dendritic cells. Acts as a negative regulator of angiogenesis, probably by promoting macrophage chemotaxis. Plays a key role in brain microglia by regulating inflammatory response in the central nervous system (CNS) and regulating synapse maturation. Required to restrain the microglial inflammatory response in the CNS and the resulting parenchymal damage in response to pathological stimuli. Involved in brain development by participating in synaptic pruning, a natural process during which brain microglia eliminates extra synapses during postnatal development. Synaptic pruning by microglia is required to promote the maturation of circuit connectivity during brain development. Acts as an important regulator of the gut microbiota by controlling immunity to intestinal bacteria and fungi. Expressed in lamina propria dendritic cells in the small intestine, which form transepithelial dendrites capable of taking up bacteria in order to provide defense against pathogenic bacteria. Required to initiate innate and adaptive immune responses against dissemination of commensal fungi (mycobiota) component of the gut: expressed in mononuclear phagocytes (MNPs) and acts by promoting induction of antifungal IgG antibodies response to confer protection against disseminated C.albicans or C.auris infection. Also acts as a receptor for C-C motif chemokine CCL26, inducing cell chemotaxis. In Oryctolagus cuniculus (Rabbit), this protein is CX3C chemokine receptor 1.